The sequence spans 370 residues: 3-dehydroquinate synthase (370 aa).

NAD(+) is bound by residues 112-116, 136-137, Lys149, Lys158, and 176-179; these read GVIGD, TT, and TLKT. Zn(2+) is bound by residues Glu191, His256, and His273.

It belongs to the sugar phosphate cyclases superfamily. Dehydroquinate synthase family. Co(2+) is required as a cofactor. The cofactor is Zn(2+). Requires NAD(+) as cofactor.

The protein resides in the cytoplasm. It catalyses the reaction 7-phospho-2-dehydro-3-deoxy-D-arabino-heptonate = 3-dehydroquinate + phosphate. The protein operates within metabolic intermediate biosynthesis; chorismate biosynthesis; chorismate from D-erythrose 4-phosphate and phosphoenolpyruvate: step 2/7. Its function is as follows. Catalyzes the conversion of 3-deoxy-D-arabino-heptulosonate 7-phosphate (DAHP) to dehydroquinate (DHQ). The protein is 3-dehydroquinate synthase of Prochlorococcus marinus (strain MIT 9211).